Consider the following 548-residue polypeptide: Probable malate:quinone oxidoreductase (548 aa).

This sequence belongs to the MQO family. Requires FAD as cofactor.

It catalyses the reaction (S)-malate + a quinone = a quinol + oxaloacetate. The protein operates within carbohydrate metabolism; tricarboxylic acid cycle; oxaloacetate from (S)-malate (quinone route): step 1/1. The chain is Probable malate:quinone oxidoreductase from Escherichia coli O127:H6 (strain E2348/69 / EPEC).